Consider the following 415-residue polypeptide: Light-independent protochlorophyllide reductase subunit N (415 aa).

The [4Fe-4S] cluster site is built by C16, C41, and C98.

It belongs to the BchN/ChlN family. As to quaternary structure, protochlorophyllide reductase is composed of three subunits; BchL, BchN and BchB. Forms a heterotetramer of two BchB and two BchN subunits. It depends on [4Fe-4S] cluster as a cofactor.

The catalysed reaction is chlorophyllide a + oxidized 2[4Fe-4S]-[ferredoxin] + 2 ADP + 2 phosphate = protochlorophyllide a + reduced 2[4Fe-4S]-[ferredoxin] + 2 ATP + 2 H2O. Its pathway is porphyrin-containing compound metabolism; bacteriochlorophyll biosynthesis (light-independent). Component of the dark-operative protochlorophyllide reductase (DPOR) that uses Mg-ATP and reduced ferredoxin to reduce ring D of protochlorophyllide (Pchlide) to form chlorophyllide a (Chlide). This reaction is light-independent. The NB-protein (BchN-BchB) is the catalytic component of the complex. This chain is Light-independent protochlorophyllide reductase subunit N, found in Roseiflexus sp. (strain RS-1).